The sequence spans 432 residues: D-amino acid dehydrogenase (432 aa).

Val3–Trp17 is a binding site for FAD.

The protein belongs to the DadA oxidoreductase family. FAD is required as a cofactor.

It catalyses the reaction a D-alpha-amino acid + A + H2O = a 2-oxocarboxylate + AH2 + NH4(+). Its pathway is amino-acid degradation; D-alanine degradation; NH(3) and pyruvate from D-alanine: step 1/1. Its function is as follows. Oxidative deamination of D-amino acids. This is D-amino acid dehydrogenase from Salmonella choleraesuis (strain SC-B67).